A 167-amino-acid chain; its full sequence is Probable chorismate pyruvate-lyase (167 aa).

Substrate is bound by residues arginine 71, isoleucine 110, and glutamate 150.

This sequence belongs to the UbiC family.

The protein localises to the cytoplasm. It catalyses the reaction chorismate = 4-hydroxybenzoate + pyruvate. The protein operates within cofactor biosynthesis; ubiquinone biosynthesis. In terms of biological role, removes the pyruvyl group from chorismate, with concomitant aromatization of the ring, to provide 4-hydroxybenzoate (4HB) for the ubiquinone pathway. This Acinetobacter baylyi (strain ATCC 33305 / BD413 / ADP1) protein is Probable chorismate pyruvate-lyase.